We begin with the raw amino-acid sequence, 76 residues long: Small ribosomal subunit protein bS18 (76 aa).

The protein belongs to the bacterial ribosomal protein bS18 family. As to quaternary structure, part of the 30S ribosomal subunit. Forms a tight heterodimer with protein bS6.

Its function is as follows. Binds as a heterodimer with protein bS6 to the central domain of the 16S rRNA, where it helps stabilize the platform of the 30S subunit. In Alkaliphilus metalliredigens (strain QYMF), this protein is Small ribosomal subunit protein bS18.